Consider the following 74-residue polypeptide: U3-agatoxin-Ao1g (74 aa).

The signal sequence occupies residues 1-20; the sequence is MRAIISLLLISTMVFGVIEA. Positions 21–34 are excised as a propeptide; the sequence is VSVEEGLKIFEGER. Disulfide bonds link Cys37–Cys53, Cys44–Cys58, Cys52–Cys68, and Cys60–Cys66. Asn72 bears the Asparagine amide mark.

The protein belongs to the neurotoxin 07 (Beta/delta-agtx) family. 03 (aga-4) subfamily. Aga sub-subfamily. In terms of tissue distribution, expressed by the venom gland.

Its subcellular location is the secreted. Functionally, insecticidal neurotoxin that modulates the insect Nav channel (DmNaV1/tipE (para/tipE)) in a unique manner, with both the activation and inactivation processes being affected. The voltage dependence of activation is shifted toward more hyperpolarized potentials (analogous to site 4 toxins) and a non-inactivating persistent sodium current is induced (site 3-like action). Interestingly, both effects take place in a voltage-dependent manner, producing a bell-shaped curve between -80 and 0 mV. This is U3-agatoxin-Ao1g from Agelena orientalis (Funnel-web spider).